We begin with the raw amino-acid sequence, 51 residues long: rpoE leader peptide (51 aa).

A short protein whose stop codon overlaps with the start codon of downstream rpoE; a premature stop codon at position 12 results in decreased expression of ECF sigma factor RpoE, thus they are translationally coupled. This chain is rpoE leader peptide, found in Escherichia coli (strain K12).